A 398-amino-acid chain; its full sequence is 1-deoxy-D-xylulose 5-phosphate reductoisomerase (398 aa).

Residues threonine 10, glycine 11, serine 12, isoleucine 13, glycine 36, lysine 37, asparagine 38, and asparagine 124 each contribute to the NADPH site. Lysine 125 contributes to the 1-deoxy-D-xylulose 5-phosphate binding site. Glutamate 126 is a binding site for NADPH. Aspartate 150 is a binding site for Mn(2+). Serine 151, glutamate 152, serine 186, and histidine 209 together coordinate 1-deoxy-D-xylulose 5-phosphate. Glutamate 152 serves as a coordination point for Mn(2+). An NADPH-binding site is contributed by glycine 215. Residues serine 222, asparagine 227, lysine 228, and glutamate 231 each contribute to the 1-deoxy-D-xylulose 5-phosphate site. A Mn(2+)-binding site is contributed by glutamate 231.

This sequence belongs to the DXR family. Homodimer. Mg(2+) is required as a cofactor. The cofactor is Mn(2+).

The enzyme catalyses 2-C-methyl-D-erythritol 4-phosphate + NADP(+) = 1-deoxy-D-xylulose 5-phosphate + NADPH + H(+). It functions in the pathway isoprenoid biosynthesis; isopentenyl diphosphate biosynthesis via DXP pathway; isopentenyl diphosphate from 1-deoxy-D-xylulose 5-phosphate: step 1/6. Catalyzes the NADPH-dependent rearrangement and reduction of 1-deoxy-D-xylulose-5-phosphate (DXP) to 2-C-methyl-D-erythritol 4-phosphate (MEP). The protein is 1-deoxy-D-xylulose 5-phosphate reductoisomerase of Salmonella choleraesuis (strain SC-B67).